The sequence spans 327 residues: DNA-directed RNA polymerase subunit alpha (327 aa).

The alpha N-terminal domain (alpha-NTD) stretch occupies residues Met1 to Glu233. The segment at Glu266–Lys327 is alpha C-terminal domain (alpha-CTD).

It belongs to the RNA polymerase alpha chain family. In terms of assembly, in plastids the minimal PEP RNA polymerase catalytic core is composed of four subunits: alpha, beta, beta', and beta''. When a (nuclear-encoded) sigma factor is associated with the core the holoenzyme is formed, which can initiate transcription.

Its subcellular location is the plastid. It localises to the chloroplast. It catalyses the reaction RNA(n) + a ribonucleoside 5'-triphosphate = RNA(n+1) + diphosphate. Its function is as follows. DNA-dependent RNA polymerase catalyzes the transcription of DNA into RNA using the four ribonucleoside triphosphates as substrates. This is DNA-directed RNA polymerase subunit alpha from Barbarea verna (Land cress).